A 244-amino-acid chain; its full sequence is MRKYDPIIVALDFPEERKALEVAEKIIPYVKNFKVGLELFSVAGPHIVKALKEMGTNVFIDLKLFDIPNTVVRTLDRLLTLDPFMVTLHILGGEEMLRESVKLVSQYKESNKTEYPYLLGVTVLTSFNEETLRRSWGISRSLPEQVLFLAQLAQETGLDGVIASPWEIELLRNNLRRPMLIVTPGIRLTKDKTDDQQRIMTPREALERGSDYLVIGRPITQSSDPYEVIRNIRSQIEDIVESRL.

Substrate-binding positions include D12, K34, D61 to T70, T125, R187, Q196, G216, and R217. The active-site Proton donor is K63.

The protein belongs to the OMP decarboxylase family. Type 1 subfamily. As to quaternary structure, homodimer.

It catalyses the reaction orotidine 5'-phosphate + H(+) = UMP + CO2. It functions in the pathway pyrimidine metabolism; UMP biosynthesis via de novo pathway; UMP from orotate: step 2/2. Its function is as follows. Catalyzes the decarboxylation of orotidine 5'-monophosphate (OMP) to uridine 5'-monophosphate (UMP). The sequence is that of Orotidine 5'-phosphate decarboxylase from Dictyoglomus thermophilum (strain ATCC 35947 / DSM 3960 / H-6-12).